The chain runs to 236 residues: Ubiquinone biosynthesis O-methyltransferase (236 aa).

S-adenosyl-L-methionine contacts are provided by Arg-40, Gly-59, Asp-80, and Leu-124.

This sequence belongs to the methyltransferase superfamily. UbiG/COQ3 family.

The enzyme catalyses a 3-demethylubiquinol + S-adenosyl-L-methionine = a ubiquinol + S-adenosyl-L-homocysteine + H(+). It catalyses the reaction a 3-(all-trans-polyprenyl)benzene-1,2-diol + S-adenosyl-L-methionine = a 2-methoxy-6-(all-trans-polyprenyl)phenol + S-adenosyl-L-homocysteine + H(+). The protein operates within cofactor biosynthesis; ubiquinone biosynthesis. O-methyltransferase that catalyzes the 2 O-methylation steps in the ubiquinone biosynthetic pathway. The chain is Ubiquinone biosynthesis O-methyltransferase from Saccharophagus degradans (strain 2-40 / ATCC 43961 / DSM 17024).